The sequence spans 212 residues: FMN-dependent NADH:quinone oxidoreductase (212 aa).

Residues S9, 15-17 (SVS), and 138-141 (TRGG) contribute to the FMN site.

Belongs to the azoreductase type 1 family. Homodimer. FMN is required as a cofactor.

The enzyme catalyses 2 a quinone + NADH + H(+) = 2 a 1,4-benzosemiquinone + NAD(+). It catalyses the reaction N,N-dimethyl-1,4-phenylenediamine + anthranilate + 2 NAD(+) = 2-(4-dimethylaminophenyl)diazenylbenzoate + 2 NADH + 2 H(+). In terms of biological role, quinone reductase that provides resistance to thiol-specific stress caused by electrophilic quinones. Its function is as follows. Also exhibits azoreductase activity. Catalyzes the reductive cleavage of the azo bond in aromatic azo compounds to the corresponding amines. In Delftia acidovorans (strain DSM 14801 / SPH-1), this protein is FMN-dependent NADH:quinone oxidoreductase.